The primary structure comprises 249 residues: Coproheme decarboxylase (249 aa).

Residues arginine 131, 145-149 (YPMNK), histidine 172, and glutamine 185 contribute to the Fe-coproporphyrin III site. Tyrosine 145 is an active-site residue.

This sequence belongs to the ChdC family. Type 1 subfamily. Requires Fe-coproporphyrin III as cofactor.

It catalyses the reaction Fe-coproporphyrin III + 2 H2O2 + 2 H(+) = heme b + 2 CO2 + 4 H2O. It carries out the reaction Fe-coproporphyrin III + H2O2 + H(+) = harderoheme III + CO2 + 2 H2O. The catalysed reaction is harderoheme III + H2O2 + H(+) = heme b + CO2 + 2 H2O. It functions in the pathway porphyrin-containing compound metabolism; protoheme biosynthesis. In terms of biological role, involved in coproporphyrin-dependent heme b biosynthesis. Catalyzes the decarboxylation of Fe-coproporphyrin III (coproheme) to heme b (protoheme IX), the last step of the pathway. The reaction occurs in a stepwise manner with a three-propionate intermediate. This Staphylococcus carnosus (strain TM300) protein is Coproheme decarboxylase.